Here is a 212-residue protein sequence, read N- to C-terminus: Deoxyribose-phosphate aldolase (212 aa).

Aspartate 89 (proton donor/acceptor) is an active-site residue. The active-site Schiff-base intermediate with acetaldehyde is the lysine 151. The active-site Proton donor/acceptor is the lysine 180.

It belongs to the DeoC/FbaB aldolase family. DeoC type 1 subfamily.

The protein resides in the cytoplasm. The enzyme catalyses 2-deoxy-D-ribose 5-phosphate = D-glyceraldehyde 3-phosphate + acetaldehyde. It participates in carbohydrate degradation; 2-deoxy-D-ribose 1-phosphate degradation; D-glyceraldehyde 3-phosphate and acetaldehyde from 2-deoxy-alpha-D-ribose 1-phosphate: step 2/2. Catalyzes a reversible aldol reaction between acetaldehyde and D-glyceraldehyde 3-phosphate to generate 2-deoxy-D-ribose 5-phosphate. In Clostridium botulinum (strain Loch Maree / Type A3), this protein is Deoxyribose-phosphate aldolase.